We begin with the raw amino-acid sequence, 312 residues long: Olfactory receptor-like protein COR2 (312 aa).

The Extracellular segment spans residues 1 to 26; the sequence is MASGNCTTPTTFILSGLTDNPRLQMP. A glycan (N-linked (GlcNAc...) asparagine) is linked at Asn-5. The helical transmembrane segment at 27–49 threads the bilayer; it reads LFMVFLVIYTTTLLTNLGLIALI. At 50–57 the chain is on the cytoplasmic side; that stretch reads GMDLHLQT. A helical membrane pass occupies residues 58 to 79; sequence PMYIFLQNLSFTDAAYSTVITP. At 80–100 the chain is on the extracellular side; sequence KMLATFLEERRTISYVGCILQ. A disulfide bridge connects residues Cys-97 and Cys-179. Residues 101–120 form a helical membrane-spanning segment; that stretch reads YFSFVLLTTSEWLLLAVMAY. Over 121-139 the chain is Cytoplasmic; sequence DRYVAICKPLLYPSIMTKA. A helical membrane pass occupies residues 140–164; the sequence is VCWRLVKGLYSLAFLNSLVHTSGLL. At 165 to 205 the chain is on the extracellular side; the sequence is KLSFCSSNVVNHFFCDNRPLFQISSSSTTLNELLVIISGSL. Residues 206 to 226 form a helical membrane-spanning segment; that stretch reads FVMSSIITILISYVFIILTVV. Residues 227 to 239 are Cytoplasmic-facing; sequence MIRSKDGKYKAFS. A helical transmembrane segment spans residues 240 to 260; that stretch reads TCTSHLMAVSLFHGTVIFMYL. Topologically, residues 261–271 are extracellular; that stretch reads RSVKLFSLDTD. Residues 272–292 traverse the membrane as a helical segment; that stretch reads KIASLFYTVVIPMLNPLIYSW. Residues 293-312 are Cytoplasmic-facing; sequence RNKEVKDALRRLTATSVWLH.

The protein belongs to the G-protein coupled receptor 1 family.

The protein localises to the cell membrane. Functionally, odorant receptor. This Gallus gallus (Chicken) protein is Olfactory receptor-like protein COR2 (COR2).